We begin with the raw amino-acid sequence, 279 residues long: Proteasome subunit beta (279 aa).

A propeptide spans 1–53 (MSGTAEFPGRIPAPYLEVGSSSFVELLGSVAPELLPGRRPLPPGDMGDAAPHG) (removed in mature form; by autocatalysis). Threonine 54 acts as the Nucleophile in catalysis.

This sequence belongs to the peptidase T1B family. As to quaternary structure, the 20S proteasome core is composed of 14 alpha and 14 beta subunits that assemble into four stacked heptameric rings, resulting in a barrel-shaped structure. The two inner rings, each composed of seven catalytic beta subunits, are sandwiched by two outer rings, each composed of seven alpha subunits. The catalytic chamber with the active sites is on the inside of the barrel. Has a gated structure, the ends of the cylinder being occluded by the N-termini of the alpha-subunits. Is capped by the proteasome-associated ATPase, ARC.

It localises to the cytoplasm. The enzyme catalyses Cleavage of peptide bonds with very broad specificity.. It functions in the pathway protein degradation; proteasomal Pup-dependent pathway. With respect to regulation, the formation of the proteasomal ATPase ARC-20S proteasome complex, likely via the docking of the C-termini of ARC into the intersubunit pockets in the alpha-rings, may trigger opening of the gate for substrate entry. Interconversion between the open-gate and close-gate conformations leads to a dynamic regulation of the 20S proteasome proteolysis activity. Component of the proteasome core, a large protease complex with broad specificity involved in protein degradation. The sequence is that of Proteasome subunit beta from Stackebrandtia nassauensis (strain DSM 44728 / CIP 108903 / NRRL B-16338 / NBRC 102104 / LLR-40K-21).